The sequence spans 655 residues: Very long-chain specific acyl-CoA dehydrogenase, mitochondrial (655 aa).

A mitochondrion-targeting transit peptide spans 1–40; the sequence is MQSARMTPSVGRQLLRLGARSSRSAALQGQPRPTSAQRLY. The disordered stretch occupies residues 1-70; sequence MQSARMTPSV…TREKPARAES (70 aa). Positions 21 to 37 are enriched in polar residues; it reads SSRSAALQGQPRPTSAQ. Residues 41 to 482 form a catalytic region; the sequence is ASEATQAVLE…ALQGCMDKGK (442 aa). Position 51 is an N6-acetyllysine (Lys-51). Residues 60-70 are compositionally biased toward basic and acidic residues; that stretch reads STREKPARAES. N6-acetyllysine; alternate is present on residues Lys-71 and Lys-127. Residues Lys-71 and Lys-127 each carry the N6-succinyllysine; alternate modification. Lys-195 is modified (N6-succinyllysine). Residue 214–223 coordinates FAD; that stretch reads FCLTEPSSGS. Cys-237 bears the S-nitrosocysteine mark. An N6-acetyllysine; alternate modification is found at Lys-239. Lys-239 is modified (N6-succinyllysine; alternate). 249–251 lines the FAD pocket; that stretch reads WIS. N6-succinyllysine is present on Lys-268. An N6-acetyllysine; alternate mark is found at Lys-276 and Lys-278. Residues Lys-276 and Lys-278 each carry the N6-succinyllysine; alternate modification. N6-acetyllysine occurs at positions 298 and 316. Lys-331 carries the post-translational modification N6-acetyllysine; alternate. An N6-succinyllysine; alternate modification is found at Lys-331. An N6-succinyllysine modification is found at Lys-372. 461-463 serves as a coordination point for substrate; the sequence is FEG. The active-site Proton acceptor is the Glu-462. 464–466 is a binding site for FAD; the sequence is TND. Lys-482 carries the post-translational modification N6-acetyllysine; alternate. Lys-482 is subject to N6-succinyllysine; alternate. A membrane-anchoring region spans residues 483–516; sequence ELTGLGNALKNPLGNVGLLIGEASKQLRRRTGIG. Phosphoserine is present on residues Ser-517 and Ser-522. At Lys-550 the chain carries N6-acetyllysine. Lys-556 carries the post-translational modification N6-acetyllysine; alternate. Lys-556 is modified (N6-succinyllysine; alternate). Gln-562 is an FAD binding site. Residue Lys-639 is modified to N6-succinyllysine.

Belongs to the acyl-CoA dehydrogenase family. Homodimer. Homodimerizes after import into the mitochondrion. It depends on FAD as a cofactor. In terms of processing, S-nitrosylation at Cys-237 in liver improves catalytic efficiency. Widely expressed (at protein level).

It is found in the mitochondrion inner membrane. It catalyses the reaction a very-long-chain 2,3-saturated fatty acyl-CoA + oxidized [electron-transfer flavoprotein] + H(+) = a very-long-chain (2E)-enoyl-CoA + reduced [electron-transfer flavoprotein]. It carries out the reaction dodecanoyl-CoA + oxidized [electron-transfer flavoprotein] + H(+) = (2E)-dodecenoyl-CoA + reduced [electron-transfer flavoprotein]. The catalysed reaction is tetradecanoyl-CoA + oxidized [electron-transfer flavoprotein] + H(+) = (2E)-tetradecenoyl-CoA + reduced [electron-transfer flavoprotein]. The enzyme catalyses oxidized [electron-transfer flavoprotein] + hexadecanoyl-CoA + H(+) = (2E)-hexadecenoyl-CoA + reduced [electron-transfer flavoprotein]. It catalyses the reaction octadecanoyl-CoA + oxidized [electron-transfer flavoprotein] + H(+) = (2E)-octadecenoyl-CoA + reduced [electron-transfer flavoprotein]. It carries out the reaction eicosanoyl-CoA + oxidized [electron-transfer flavoprotein] + H(+) = (2E)-eicosenoyl-CoA + reduced [electron-transfer flavoprotein]. The catalysed reaction is docosanoyl-CoA + oxidized [electron-transfer flavoprotein] + H(+) = (2E)-docosenoyl-CoA + reduced [electron-transfer flavoprotein]. The enzyme catalyses tetracosanoyl-CoA + oxidized [electron-transfer flavoprotein] + H(+) = (2E)-tetracosenoyl-CoA + reduced [electron-transfer flavoprotein]. It functions in the pathway lipid metabolism; mitochondrial fatty acid beta-oxidation. Its function is as follows. Very long-chain specific acyl-CoA dehydrogenase is one of the acyl-CoA dehydrogenases that catalyze the first step of mitochondrial fatty acid beta-oxidation, an aerobic process breaking down fatty acids into acetyl-CoA and allowing the production of energy from fats. The first step of fatty acid beta-oxidation consists in the removal of one hydrogen from C-2 and C-3 of the straight-chain fatty acyl-CoA thioester, resulting in the formation of trans-2-enoyl-CoA. Among the different mitochondrial acyl-CoA dehydrogenases, very long-chain specific acyl-CoA dehydrogenase acts specifically on acyl-CoAs with saturated 12 to 24 carbons long primary chains. The chain is Very long-chain specific acyl-CoA dehydrogenase, mitochondrial from Rattus norvegicus (Rat).